A 418-amino-acid polypeptide reads, in one-letter code: Tyrosine--tRNA ligase (418 aa).

Y34 contributes to the L-tyrosine binding site. A 'HIGH' region motif is present at residues 39–48 (PTADSLHLGH). L-tyrosine is bound by residues Y169 and Q173. Positions 229 to 233 (KFGKS) match the 'KMSKS' region motif. Residue K232 participates in ATP binding. An S4 RNA-binding domain is found at 352-418 (LNLVDMLVTA…GKKKYAVLTY (67 aa)).

It belongs to the class-I aminoacyl-tRNA synthetase family. TyrS type 1 subfamily. Homodimer.

It is found in the cytoplasm. It catalyses the reaction tRNA(Tyr) + L-tyrosine + ATP = L-tyrosyl-tRNA(Tyr) + AMP + diphosphate + H(+). Its function is as follows. Catalyzes the attachment of tyrosine to tRNA(Tyr) in a two-step reaction: tyrosine is first activated by ATP to form Tyr-AMP and then transferred to the acceptor end of tRNA(Tyr). This is Tyrosine--tRNA ligase from Streptococcus pyogenes serotype M18 (strain MGAS8232).